Reading from the N-terminus, the 89-residue chain is Cell division protein FtsB (89 aa).

At 1–3 (MRP) the chain is on the cytoplasmic side. The helical transmembrane segment at 4–21 (IIAILIALFILLQYQLWF) threads the bilayer. Residues 22–89 (AAGGIVSVHH…KNEVFYQIVK (68 aa)) are Periplasmic-facing. The stretch at 29-62 (VHHLNENINHQIMENQKLKDRNTALLADIDDLKH) forms a coiled coil.

Belongs to the FtsB family. As to quaternary structure, part of a complex composed of FtsB, FtsL and FtsQ.

The protein localises to the cell inner membrane. Its function is as follows. Essential cell division protein. May link together the upstream cell division proteins, which are predominantly cytoplasmic, with the downstream cell division proteins, which are predominantly periplasmic. The sequence is that of Cell division protein FtsB from Coxiella burnetii (strain RSA 493 / Nine Mile phase I).